Here is a 535-residue protein sequence, read N- to C-terminus: Peptide chain release factor 3 (535 aa).

Positions 8-277 constitute a tr-type G domain; that stretch reads KRRRTFAIIS…TLVDLAPPPG (270 aa). GTP contacts are provided by residues 17–24, 85–89, and 139–142; these read SHPDAGKT, DTPGH, and NKLD.

This sequence belongs to the TRAFAC class translation factor GTPase superfamily. Classic translation factor GTPase family. PrfC subfamily.

The protein resides in the cytoplasm. In terms of biological role, increases the formation of ribosomal termination complexes and stimulates activities of RF-1 and RF-2. It binds guanine nucleotides and has strong preference for UGA stop codons. It may interact directly with the ribosome. The stimulation of RF-1 and RF-2 is significantly reduced by GTP and GDP, but not by GMP. This chain is Peptide chain release factor 3, found in Nitrosomonas eutropha (strain DSM 101675 / C91 / Nm57).